A 758-amino-acid chain; its full sequence is CRISPR system single-strand-specific deoxyribonuclease Cas10/Csm1 (subtype III-A) (758 aa).

Positions 1–82 are HD domain; sequence MKKEKIDLFY…TYIADNIASG (82 aa). The GGDEF domain maps to 509-647; it reads KRLAVVRLDV…EKDSISLFSS (139 aa).

It belongs to the CRISPR-associated Cas10/Csm1 family. Part of the Csm effector complex that includes at least Cas10(1), Csm2(3), Csm3(5), Csm4(1), Csm5(1) and mature crRNA. The Csm complex is elongated and slightly twisted with a maximal length of 215 Angstroms and a diameter of 75-80 Angstroms. It has been modeled to have a central protein filamant of Csm3 subunits along which the dsRNA helix of paired crRNA and target RNA binds. The filament is capped at one end by Cas10 and Csm4 and at the other end by Csm5; ssDNA is thought to bind to the N-terminal HD domain of Cas10. Csm with a precursor crRNA does not include Csm5, while Cas6, the enzyme probably involved in pre-crRNA processing, is found associated with a subset of the Csm complex. The cofactor is a divalent metal cation.

The enzyme catalyses 6 ATP = cyclic hexaadenylate + 6 diphosphate. Its activity is regulated as follows. ssDNase activity is activated by target RNA binding to the Csm-crRNA complex and is inhibited by EDTA. In terms of biological role, CRISPR (clustered regularly interspaced short palindromic repeat) is an adaptive immune system that provides protection against mobile genetic elements (viruses, transposable elements and conjugative plasmids). CRISPR clusters contain spacers, sequences complementary to antecedent mobile elements, and target invading nucleic acids. CRISPR clusters are transcribed and processed into CRISPR RNA (crRNA). The type III-A Csm effector complex binds crRNA and acts as a crRNA-guided RNase, DNase and cyclic oligoadenylate synthase; binding of target RNA cognate to the crRNA is required for all activities. In a heterologous host this Csm effector complex restricts ssRNA phage MS2, suggesting it may target RNA viruses in vivo. Its function is as follows. Csm functions as a non-specific ssDNase. Base-pairing between crRNA and target RNA to form a ternary Csm complex activates a ssDNase activity; target RNA cleavage suppresses the ssDNase, a temporal control that prevents uncontrolled DNA degradation. Viral RNA transcripts probably tether the Csm complex to the viral genome, recruiting Cas10 ssDNA activity which is able to degrade DNA in the transcription bubble, spatially controlling the DNase activity. This subunit has a weak ssDNase activity that is dramatically activated by the ternary Csm effector complex (the crRNA, Cas proteins and a cognate target ssRNA). Target RNA and ssDNA are cleaved simultaneously, although RNase activity (of Csm3) is much faster. RNA cleavage by Csm3 is not required for ssDNase activity as Csm complex with inactive Csm3 still has ssDNase activity; however as the cleaved target RNA products dissociate away ssDNase activity decreases. Self-recognition, with subsequent repression of the ssDNase activity, occurs when the 5' handle of the crRNA bases pairs with the 3' flanking sequence of the target RNA (which would occur if the CRISPR locus were transcribed as an anti-pre-crRNA). This protein has low activity on dsDNA which is not stimulated by the Csm complex. Functionally, this subunit is a single-strand-specific deoxyribonuclease (ssDNase) which digests both linear and circular ssDNA; it has both exo- and endonuclease activity. In terms of biological role, when associated with the ternary Csm effector complex (the crRNA, Cas proteins and a cognate target ssRNA) synthesizes cyclic oligoadenylates (cOA) from ATP, producing cyclic triadenylate (cA3) up to cyclic hexaadenylate (cA6), which is the active cOA. The enzyme is also able to cyclize pppA3 up to pppA6. cOAs are second messengers that induce an antiviral state important for defense against invading nucleic acids. Synthesis of cOA can occur with AMP plus ATP, 2'dATP or 3'dATP (but no other nucleotides), and requires a free 3'-OH ribose moiety. The polypeptide is CRISPR system single-strand-specific deoxyribonuclease Cas10/Csm1 (subtype III-A) (Streptococcus thermophilus).